Reading from the N-terminus, the 818-residue chain is Adhesion G protein-coupled receptor E5 (818 aa).

Positions 1 to 23 (MRGVRCPGLLVVCILLSLSGAGT) are cleaved as a signal peptide. At 24-533 (QKAESKNCAK…VQDPRLELIT (510 aa)) the chain is on the extracellular side. One can recognise an EGF-like 1 domain in the interval 27-68 (ESKNCAKWCPINSKCVSNRSCVCKPGFSSEKELITNPAESCE). Cystine bridges form between cysteine 31–cysteine 41, cysteine 35–cysteine 47, cysteine 49–cysteine 67, cysteine 73–cysteine 86, cysteine 80–cysteine 95, cysteine 97–cysteine 118, cysteine 169–cysteine 182, cysteine 176–cysteine 191, cysteine 193–cysteine 212, cysteine 218–cysteine 231, cysteine 225–cysteine 240, and cysteine 242–cysteine 260. Asparagine 44 carries N-linked (GlcNAc...) asparagine glycosylation. Residues 69 to 119 (DINECLLPGFSCGDFAMCKNSEGSYTCVCNLGYKLLSGAESFVNESENTCQ) enclose the EGF-like 2; calcium-binding domain. A glycan (N-linked (GlcNAc...) asparagine) is linked at asparagine 112. The EGF-like 3; calcium-binding domain occupies 165–213 (DVNECISGQNHCHQSTHCINKLGGYSCICRQGWKPVPGSPNGPVSTVCE). The EGF-like 4; calcium-binding domain occupies 214-261 (DVDECSSGQHQCHNSTVCKNTVGSYKCHCRPGWKPTSGSLRGPDTICQ). An N-linked (GlcNAc...) asparagine glycan is attached at asparagine 227. N-linked (GlcNAc...) asparagine glycosylation is found at asparagine 299 and asparagine 395. One can recognise a GAIN-B domain in the interval 347–525 (PFTYTSPSNT…AILMAQYHVQ (179 aa)). A Phosphoserine modification is found at serine 425. N-linked (GlcNAc...) asparagine glycosylation is found at asparagine 461 and asparagine 502. Disulfide bonds link cysteine 482–cysteine 507 and cysteine 499–cysteine 509. The interval 482 to 525 (CAFWKAHNGNGYWDTDGCSMNGTGFCHCNHLTSFAILMAQYHVQ) is GPS. The helical transmembrane segment at 534-554 (KVGLLLSLICLLLCILTFLLV) threads the bilayer. The Cytoplasmic segment spans residues 555–562 (KPIQSSRT). A helical membrane pass occupies residues 563 to 583 (MVHLHLCICLFLGSIIFLVGV). At 584–602 (ENEGGEVGLRCRLVAMMLH) the chain is on the extracellular side. A helical membrane pass occupies residues 603–623 (FCFLAAFCWMALEGVELYFLV). The Cytoplasmic portion of the chain corresponds to 624–637 (VRVFQGQGLSTWQR). Residues 638–658 (CLIGYGVPLLIVAISMAVVKM) form a helical membrane-spanning segment. Over 659-679 (DGYGHATYCWLDFRKQGFLWS) the chain is Extracellular. Residues 680–700 (FSGPVAFIIFCNAAIFVITVW) traverse the membrane as a helical segment. The Cytoplasmic portion of the chain corresponds to 701–723 (KLTKKFSEINPNMKKLRKARVLT). The chain crosses the membrane as a helical span at residues 724–744 (ITAIAQLLVLGCTWGFGLFLF). The Extracellular portion of the chain corresponds to 745–752 (NPHSTWLS). Residues 753–773 (YIFTLLNCLQGLFLYVMLCLL) traverse the membrane as a helical segment. The Cytoplasmic segment spans residues 774 to 818 (NKKVREEYWKWACMVTGSKYTEFNSSTTGTGTSQTRALRSSESGM). Phosphoserine is present on serine 798. Positions 799–808 (STTGTGTSQT) are enriched in low complexity. A disordered region spans residues 799–818 (STTGTGTSQTRALRSSESGM). Phosphothreonine is present on threonine 808. The segment covering 809-818 (RALRSSESGM) has biased composition (polar residues). Phosphoserine is present on residues serine 814 and serine 816.

It belongs to the G-protein coupled receptor 2 family. LN-TM7 subfamily. As to quaternary structure, forms a heterodimer, consisting of a large extracellular region (alpha subunit) non-covalently linked to a seven-transmembrane moiety (beta subunit). Interacts with complement decay-accelerating factor (DAF). The largest isoform (isoform 1) do not interact with DAF. Also interacts with chondroitin sulfate. Proteolytically cleaved into 2 subunits, an extracellular alpha subunit and a seven-transmembrane subunit. In terms of tissue distribution, although predominantly expressed by cells of the immune system, expressed ubiquitously with particularly high levels of expression in the lung and the thymus gland. In the spleen, expression is detected on most myeloid cells and variable portions of T-cells, B-cells and NK cells. In the bone marrow, expressed in nearly all myeloid cells, whereas little if any expression is found on erythroid cells.

Its subcellular location is the cell membrane. It localises to the secreted. The protein localises to the extracellular space. Receptor potentially involved in both adhesion and signaling processes early after leukocyte activation. Plays an essential role in leukocyte migration. In Mus musculus (Mouse), this protein is Adhesion G protein-coupled receptor E5.